A 1132-amino-acid polypeptide reads, in one-letter code: Phosphatidylinositide phosphatase SAC2 (1132 aa).

One can recognise an SAC domain in the interval 167–518 (LKMFMDSESF…GDSISRQYAG (352 aa)). The 168-residue stretch at 593–760 (RSHQELISQL…KSSKPHEDII (168 aa)) folds into the hSac2 domain. Phosphoserine is present on residues Ser827 and Ser830. A disordered region spans residues 846 to 875 (ESDGDMSSDNDSYHSDEFLTNSKSDEDRQL). Over residues 856 to 874 (DSYHSDEFLTNSKSDEDRQ) the composition is skewed to basic and acidic residues. Ser878, Ser881, Ser907, and Ser910 each carry phosphoserine. Disordered regions lie at residues 923–942 (VAHG…KSPS) and 974–1017 (LSET…LDVS). Ser1103 carries the phosphoserine modification.

Homodimer. Interacts with OCRL and RAB5A. Interacts with INPP5B and INPP4A. Interacts with STAT3; the interaction is independent of STAT3 'Tyr-705' phosphorylation status. Ubiquitous. Highly expressed in brain.

The protein resides in the membrane. It is found in the clathrin-coated pit. It localises to the early endosome. The protein localises to the recycling endosome. The catalysed reaction is a myo-inositol phosphate + H2O = myo-inositol + phosphate. Functionally, inositol 4-phosphatase which mainly acts on phosphatidylinositol 4-phosphate. May be functionally linked to OCRL, which converts phosphatidylinositol 4,5-bisphosphate to phosphatidylinositol, for a sequential dephosphorylation of phosphatidylinositol 4,5-bisphosphate at the 5 and 4 position of inositol, thus playing an important role in the endocytic recycling. Regulator of TF:TFRC and integrins recycling pathway, is also involved in cell migration mechanisms. Modulates AKT/GSK3B pathway by decreasing AKT and GSK3B phosphorylation. Negatively regulates STAT3 signaling pathway through inhibition of STAT3 phosphorylation and translocation to the nucleus. Functionally important modulator of cardiac myocyte size and of the cardiac response to stress. May play a role as negative regulator of axon regeneration after central nervous system injuries. This chain is Phosphatidylinositide phosphatase SAC2, found in Homo sapiens (Human).